The following is a 142-amino-acid chain: Putative pre-16S rRNA nuclease (142 aa).

This sequence belongs to the YqgF nuclease family.

It localises to the cytoplasm. Its function is as follows. Could be a nuclease involved in processing of the 5'-end of pre-16S rRNA. This is Putative pre-16S rRNA nuclease from Lawsonia intracellularis (strain PHE/MN1-00).